Here is a 110-residue protein sequence, read N- to C-terminus: U1-lycotoxin-Ls1ee (110 aa).

An N-terminal signal peptide occupies residues 1 to 20 (MKFVLLFGVLLVTLFSYSSA). The propeptide occupies 21–44 (EMLDDFDQADEDELLSLIEKEEAR). 4 cysteine pairs are disulfide-bonded: Cys47–Cys62, Cys54–Cys71, Cys61–Cys89, and Cys73–Cys87.

It belongs to the neurotoxin 19 (CSTX) family. 03 subfamily. Expressed by the venom gland.

It is found in the secreted. In Lycosa singoriensis (Wolf spider), this protein is U1-lycotoxin-Ls1ee.